The following is a 134-amino-acid chain: MMDIFNALDISASGMYAQRIRMNTVASNLANYESFKSDGTPFNRLVPVFEAVENLEDPSEVYVNVREIREVPGFKLIYDPENPNADERGYVRLPNIEPVKEMVDMITAVRSYEANLKAFSLTKEIFERTFEAWK.

The protein belongs to the flagella basal body rod proteins family. In terms of assembly, the basal body constitutes a major portion of the flagellar organelle and consists of four rings (L,P,S, and M) mounted on a central rod. The rod consists of about 26 subunits of FlgG in the distal portion, and FlgB, FlgC and FlgF are thought to build up the proximal portion of the rod with about 6 subunits each.

It is found in the bacterial flagellum basal body. The protein is Flagellar basal-body rod protein FlgC (flgC) of Aquifex aeolicus (strain VF5).